The primary structure comprises 299 residues: Type II restriction enzyme BglI (299 aa).

Positions 116, 142, and 143 each coordinate Mg(2+).

Homodimer. The cofactor is Mg(2+).

The catalysed reaction is Endonucleolytic cleavage of DNA to give specific double-stranded fragments with terminal 5'-phosphates.. Its function is as follows. A P subtype restriction enzyme that recognizes the double-stranded sequence 5'-GCCNNNNNGGC-3' and cleaves before N-8. The sequence is that of Type II restriction enzyme BglI (bglIR) from Bacillus subtilis.